Here is a 128-residue protein sequence, read N- to C-terminus: Protein BEX1 (128 aa).

A disordered region spans residues 1-55 (MESKDQGAKNLNMENDHQKKEEKEEKPQDTIKREPVVAPTFEAGKNCAPRGGRRR). Residues 14–35 (ENDHQKKEEKEEKPQDTIKREP) show a composition bias toward basic and acidic residues. Phosphoserine; by PKB/AKT1 is present on Ser105. The segment at 107–128 (SLRAVSTDPPHHDHHDEFCLMP) is disordered. Residues 115 to 128 (PPHHDHHDEFCLMP) show a composition bias toward basic and acidic residues. Positions 117-121 (HHDHH) are his cluster. Residue Cys125 coordinates Zn(2+).

The protein belongs to the BEX family. Interacts with neurotrophin receptor p75NTR/NGFR. Interacts with OMP. Post-translationally, phosphorylated. Phosphorylation of Ser-105 protects it from the proteasome. Ubiquitinated. Degraded by the proteasome. In terms of tissue distribution, expressed in the central nervous system. Expressed in Schwann cells from newborn sciatic nerve.

Its subcellular location is the nucleus. It is found in the cytoplasm. Its function is as follows. Signaling adapter molecule involved in p75NTR/NGFR signaling. Plays a role in cell cycle progression and neuronal differentiation. Inhibits neuronal differentiation in response to nerve growth factor (NGF). May act as a link between the cell cycle and neurotrophic factor signaling, possibly by functioning as an upstream modulator of receptor signaling, coordinating biological responses to external signals with internal cellular states. In absence of reductive stress, acts as a pseudosubstrate for the CRL2(FEM1B) complex: associates with FEM1B via zinc, thereby preventing association between FEM1B and its substrates. This chain is Protein BEX1 (Bex1), found in Rattus norvegicus (Rat).